The chain runs to 257 residues: Paired box protein 1 homolog (257 aa).

Low complexity predominate over residues T26–S37. The segment at T26–S58 is disordered. Over residues D38–G52 the composition is skewed to polar residues. The segment at residues K61–K187 is a DNA-binding region (paired). The PAI subdomain stretch occupies residues E64 to N120. The segment at K139–K187 is RED subdomain.

The protein localises to the nucleus. Functionally, transcription factor. May play a role in pharyngeal cell differentiation. May have a protective role in response to infection by the Gram-negative bacterium Vibrio cholerae. The chain is Paired box protein 1 homolog from Caenorhabditis elegans.